We begin with the raw amino-acid sequence, 142 residues long: Large ribosomal subunit protein uL13 (142 aa).

Belongs to the universal ribosomal protein uL13 family. As to quaternary structure, part of the 50S ribosomal subunit.

This protein is one of the early assembly proteins of the 50S ribosomal subunit, although it is not seen to bind rRNA by itself. It is important during the early stages of 50S assembly. This Aromatoleum aromaticum (strain DSM 19018 / LMG 30748 / EbN1) (Azoarcus sp. (strain EbN1)) protein is Large ribosomal subunit protein uL13.